We begin with the raw amino-acid sequence, 444 residues long: L-seryl-tRNA(Sec) selenium transferase (444 aa).

Lysine 284 carries the N6-(pyridoxal phosphate)lysine modification.

This sequence belongs to the SelA family. The cofactor is pyridoxal 5'-phosphate.

It localises to the cytoplasm. It catalyses the reaction L-seryl-tRNA(Sec) + selenophosphate + H(+) = L-selenocysteinyl-tRNA(Sec) + phosphate. Its pathway is aminoacyl-tRNA biosynthesis; selenocysteinyl-tRNA(Sec) biosynthesis; selenocysteinyl-tRNA(Sec) from L-seryl-tRNA(Sec) (bacterial route): step 1/1. In terms of biological role, converts seryl-tRNA(Sec) to selenocysteinyl-tRNA(Sec) required for selenoprotein biosynthesis. This Wolinella succinogenes (strain ATCC 29543 / DSM 1740 / CCUG 13145 / JCM 31913 / LMG 7466 / NCTC 11488 / FDC 602W) (Vibrio succinogenes) protein is L-seryl-tRNA(Sec) selenium transferase.